The primary structure comprises 425 residues: MADIMHVFAREILDSRGNPTVEAEVFLDDGSHGVAGVPSGASTGVHEAHELRDGGERYLGKGVLNAVNNVNEEIADAIAGAEADDQRLIDQAMIALDGTENKSRLGANAILGVSIAVAKAAAESAGLPLYRYIGGPNAHVLPVPMMNIVNGGAHADSGVDVQEFMIAPIGAESFSEALRMGAEVYHSLKSVIKSKGLSTGLGDEGGFAPSVESTKAALDLIVEAIEKAGFKPGADIALALDVASSEFYKDGKYHFEGGEHTAEEMAKVYEQLIAEYPIVSIEDPLQEDDWEGYTALTAAIGDKVQIVGDDFFVTNPARLKEGIEKKAANALLVKVNQIGTLTETFDAVDLAHRNGYRTMMSHRSGETEDTTIADLAVALGCGQIKTGAPARSERVAKYNQLLRIEQQLDDAAVYAGRSAFPRFQG.

Position 162 (glutamine 162) interacts with (2R)-2-phosphoglycerate. The active-site Proton donor is the glutamate 204. Aspartate 241, glutamate 282, and aspartate 309 together coordinate Mg(2+). (2R)-2-phosphoglycerate contacts are provided by lysine 334, arginine 363, serine 364, and lysine 385. Catalysis depends on lysine 334, which acts as the Proton acceptor.

The protein belongs to the enolase family. Requires Mg(2+) as cofactor.

It is found in the cytoplasm. The protein resides in the secreted. It localises to the cell surface. It carries out the reaction (2R)-2-phosphoglycerate = phosphoenolpyruvate + H2O. It functions in the pathway carbohydrate degradation; glycolysis; pyruvate from D-glyceraldehyde 3-phosphate: step 4/5. Its function is as follows. Catalyzes the reversible conversion of 2-phosphoglycerate (2-PG) into phosphoenolpyruvate (PEP). It is essential for the degradation of carbohydrates via glycolysis. In Corynebacterium diphtheriae (strain ATCC 700971 / NCTC 13129 / Biotype gravis), this protein is Enolase.